Reading from the N-terminus, the 1211-residue chain is MSKKSLGLDVRLELEGLISNDDTIRSEKDGRQASIFRVAELDARTEADNLRSIIHQSAREGNVNALQEALLKAPLAVNAQDGDFMTPLHYAARYGNYDAVKLLLSKNALPNTKNREGDTPLHIASKYIYGYSDICSIIDEDQADSARKYNTATKKIINALVSENAEIDPVNKYQLTPLHYAAMKSNFSALHALIKLKADVDAEDDNKMTPLLLACVHGSQEIIQELIKANSNVTKRDQRLNTVFHIVALRGEPEYLEMMMDHDPVEAIKALNLFNNEKKTPLRMAVEGNHPETLKKILQMEKKNSCKWMDREKELIHFAAEKGFLEVLKALVEAGGNKNELNEVKAVPLHVAAQMNQLEVVSYLIEEEKDNIDVVDEQGLTPLMMAVTHDSKKCVEYLIAKKANLTITDKDERTPVFIGAKFNALSSVEYILDHLRKKNKETERSALKSPTRNTLRIVSEDVRRTMVNMVDRDQNTPMHIVASNGYLEMMQLLQKHGASITQVNEDEETALHRAAIGGQTGAVRQLLEWDIRLLLMKDEMGNSALHLAARSGHDATTKVLLDNGADKEAKNSYQKTPLQVAVDSGKLETCQRLVAKGAQIESSSDTKTVLHTAAFYGNESIVRYFIAEGVTIDRRDEEGKTAFDIACENDHKDVARAFLETDQWKNLMIPCDVIPLDKHRNPVNMKRRTPFRTLLTKFPELASFVMDNCIEKSKEETDSTQSVAYNFEFLDDTYMMRCVSDDGTGEQLIGCKSAYDEDFKLEKDAQSYASNYDRVYKYHPLKLMADAEKLHLLNHPLSKALLKYKWNRLGRPMYYFALFMYLVFIVSLTQYVRHTKAPYNVWNEESYYDSEYFDENETCPQINTTKPDVVWKIIIQTLAVCQILVECFQLFQRKFAYLVNWENWIDCFIYSTALITVYDFSECSATSGVRQNWQWILAALCIFFGWINLLFMIRKMPRFGIFVVMFVDIVKTFFRFFPVFVLFIIAFSSSFYVILQNRPEFSTIFMSPLKTTVMMIGEFEFTGIFHGDETTHAEKMFGPAHTAVACALFFFFCIIMTILLMNLLVGLAVDDIKGVQEKAELKRLAMQVDLVLQIEASLHFFIQRTKKYATCRYATFPYGKLHKTGFAGWWSNFRRRFGLSVSTDPEIDEMYEREAEFTSEMTQKLQNQAAKLKNIQENIDVMYEKQVRLEAIIAKLATGLNINIELEEKDN.

Over 1–811 (MSKKSLGLDV…LKYKWNRLGR (811 aa)) the chain is Cytoplasmic. 17 ANK repeats span residues 49–79 (NLRSIIHQSAREGNVNALQEALLKAPLAVNA), 83–112 (DFMTPLHYAARYGNYDAVKLLLSKNALPNT), 116–169 (EGDT…EIDP), 173–202 (YQLTPLHYAAMKSNFSALHALIKLKADVDA), 206–235 (NKMTPLLLACVHGSQEIIQELIKANSNVTK), 239–270 (RLNTVFHIVALRGEPEYLEMMMDHDPVEAIKA), 277–306 (EKKTPLRMAVEGNHPETLKKILQMEKKNSC), 311–340 (REKELIHFAAEKGFLEVLKALVEAGGNKNE), 344–374 (VKAVPLHVAAQMNQLEVVSYLIEEEKDNIDV), 378–407 (QGLTPLMMAVTHDSKKCVEYLIAKKANLTI), 411–440 (DERTPVFIGAKFNALSSVEYILDHLRKKNK), 473–502 (DQNTPMHIVASNGYLEMMQLLQKHGASITQ), 506–535 (DEETALHRAAIGGQTGAVRQLLEWDIRLLL), 540–569 (MGNSALHLAARSGHDATTKVLLDNGADKEA), 573–602 (YQKTPLQVAVDSGKLETCQRLVAKGAQIES), 605–634 (DTKTVLHTAAFYGNESIVRYFIAEGVTIDR), and 638–669 (EGKTAFDIACENDHKDVARAFLETDQWKNLMI). The helical transmembrane segment at 812–832 (PMYYFALFMYLVFIVSLTQYV) threads the bilayer. The Extracellular portion of the chain corresponds to 833–870 (RHTKAPYNVWNEESYYDSEYFDENETCPQINTTKPDVV). N-linked (GlcNAc...) asparagine glycans are attached at residues N856 and N863. A helical membrane pass occupies residues 871 to 891 (WKIIIQTLAVCQILVECFQLF). Residues 892–894 (QRK) are Cytoplasmic-facing. Residues 895 to 915 (FAYLVNWENWIDCFIYSTALI) form a helical membrane-spanning segment. Topologically, residues 916-932 (TVYDFSECSATSGVRQN) are extracellular. The helical transmembrane segment at 933 to 953 (WQWILAALCIFFGWINLLFMI) threads the bilayer. Over 954 to 975 (RKMPRFGIFVVMFVDIVKTFFR) the chain is Cytoplasmic. A helical transmembrane segment spans residues 976–996 (FFPVFVLFIIAFSSSFYVILQ). Residues 997-1004 (NRPEFSTI) lie on the Extracellular side of the membrane. The segment at residues 1005 to 1025 (FMSPLKTTVMMIGEFEFTGIF) is an intramembrane region (pore-forming). The Extracellular portion of the chain corresponds to 1026 to 1048 (HGDETTHAEKMFGPAHTAVACAL). The helical transmembrane segment at 1049–1069 (FFFFCIIMTILLMNLLVGLAV) threads the bilayer. At 1070 to 1193 (DDIKGVQEKA…EKQVRLEAII (124 aa)) the chain is on the cytoplasmic side. Residues 1149–1191 (EMYEREAEFTSEMTQKLQNQAAKLKNIQENIDVMYEKQVRLEA) are a coiled coil.

It belongs to the transient receptor (TC 1.A.4) family. In terms of assembly, homotetramer. As to expression, expressed in many sensory neurons, including OLQ and IL1 neurons.

The protein resides in the cell membrane. In terms of biological role, receptor-activated non-selective cation channel involved in the nose-touch response and foraging behavior. Contributes to the neural responses of sensory neurons to touch, particularly after repeated mechanical stimulation. Has no apparent role in thermosensory or chemosensory behaviors. This Caenorhabditis elegans protein is Transient receptor potential cation channel subfamily A member 1 homolog (trpa-1).